We begin with the raw amino-acid sequence, 273 residues long: F-actin-capping protein subunit alpha (273 aa).

The protein belongs to the F-actin-capping protein alpha subunit family. In terms of assembly, heterodimer of an alpha and a beta subunit.

It localises to the cytoplasm. The protein localises to the cytoskeleton. F-actin-capping proteins bind in a Ca(2+)-independent manner to the fast growing ends of actin filaments (barbed end) thereby blocking the exchange of subunits at these ends. Unlike other capping proteins (such as gelsolin and severin), these proteins do not sever actin filaments. The protein is F-actin-capping protein subunit alpha (cap1) of Emericella nidulans (strain FGSC A4 / ATCC 38163 / CBS 112.46 / NRRL 194 / M139) (Aspergillus nidulans).